A 123-amino-acid chain; its full sequence is MEATSQQFMSQSYLNAQETTTRATKNYLTSLHSTRKQPSKPLKRPAISSPLNPMHPHVYRVEPVNFKVLVQRLTGAPEHETVQAKPLKTSDDAAKQSSSSFAFDPSSSWGDFSFQNPANISRW.

The interval 24–55 is disordered; sequence TKNYLTSLHSTRKQPSKPLKRPAISSPLNPMH. The span at 33–43 shows a compositional bias: basic residues; it reads STRKQPSKPLK. Residues 66 to 75 carry the VQ motif; sequence FKVLVQRLTG. Residues 77 to 94 are compositionally biased toward basic and acidic residues; sequence PEHETVQAKPLKTSDDAA. Residues 77 to 123 are disordered; it reads PEHETVQAKPLKTSDDAAKQSSSSFAFDPSSSWGDFSFQNPANISRW. Low complexity predominate over residues 97–108; it reads SSSSFAFDPSSS. The span at 109–123 shows a compositional bias: polar residues; the sequence is WGDFSFQNPANISRW.

Its subcellular location is the nucleus. May function as negative regulator of flowering transition. This is VQ motif-containing protein 29 from Arabidopsis thaliana (Mouse-ear cress).